Here is a 1295-residue protein sequence, read N- to C-terminus: DNA-directed RNA polymerase subunit beta' (1295 aa).

Residues C60, C62, C75, and C78 each contribute to the Zn(2+) site. Residues D516, D518, and D520 each coordinate Mg(2+). The Zn(2+) site is built by C841, C914, C921, and C924.

This sequence belongs to the RNA polymerase beta' chain family. The RNAP catalytic core consists of 2 alpha, 1 beta, 1 beta' and 1 omega subunit. When a sigma factor is associated with the core the holoenzyme is formed, which can initiate transcription. Mg(2+) is required as a cofactor. It depends on Zn(2+) as a cofactor.

The enzyme catalyses RNA(n) + a ribonucleoside 5'-triphosphate = RNA(n+1) + diphosphate. In terms of biological role, DNA-dependent RNA polymerase catalyzes the transcription of DNA into RNA using the four ribonucleoside triphosphates as substrates. This chain is DNA-directed RNA polymerase subunit beta', found in Dehalococcoides mccartyi (strain CBDB1).